The following is a 308-amino-acid chain: Ferrochelatase (308 aa).

The Fe cation site is built by histidine 167 and glutamate 239.

It belongs to the ferrochelatase family.

It localises to the cytoplasm. It carries out the reaction heme b + 2 H(+) = protoporphyrin IX + Fe(2+). The protein operates within porphyrin-containing compound metabolism; protoheme biosynthesis; protoheme from protoporphyrin-IX: step 1/1. In terms of biological role, catalyzes the ferrous insertion into protoporphyrin IX. The sequence is that of Ferrochelatase from Thermoplasma acidophilum (strain ATCC 25905 / DSM 1728 / JCM 9062 / NBRC 15155 / AMRC-C165).